A 153-amino-acid polypeptide reads, in one-letter code: Endoribonuclease YbeY (153 aa).

Zn(2+) contacts are provided by histidine 114, histidine 118, and histidine 124.

Belongs to the endoribonuclease YbeY family. Requires Zn(2+) as cofactor.

It localises to the cytoplasm. Its function is as follows. Single strand-specific metallo-endoribonuclease involved in late-stage 70S ribosome quality control and in maturation of the 3' terminus of the 16S rRNA. This Shewanella baltica (strain OS155 / ATCC BAA-1091) protein is Endoribonuclease YbeY.